Reading from the N-terminus, the 372-residue chain is NAD(P)H-quinone oxidoreductase subunit 1 (372 aa).

Helical transmembrane passes span 27–47 (AIWM…GVLV), 65–85 (PEYI…KLVF), 97–117 (WLFT…YLIV), 128–148 (IGTG…GLLM), 166–186 (AAQS…IVMM), 204–224 (ILGW…IAAL), 266–286 (VLSA…PIPI), 308–328 (ALGI…AILL), and 347–367 (FLLP…LAFP).

This sequence belongs to the complex I subunit 1 family. In terms of assembly, NDH-1 is composed of at least 11 different subunits.

The protein resides in the cellular thylakoid membrane. It carries out the reaction a plastoquinone + NADH + (n+1) H(+)(in) = a plastoquinol + NAD(+) + n H(+)(out). The enzyme catalyses a plastoquinone + NADPH + (n+1) H(+)(in) = a plastoquinol + NADP(+) + n H(+)(out). Its function is as follows. NDH-1 shuttles electrons from an unknown electron donor, via FMN and iron-sulfur (Fe-S) centers, to quinones in the respiratory and/or the photosynthetic chain. The immediate electron acceptor for the enzyme in this species is believed to be plastoquinone. Couples the redox reaction to proton translocation, and thus conserves the redox energy in a proton gradient. This Trichormus variabilis (strain ATCC 29413 / PCC 7937) (Anabaena variabilis) protein is NAD(P)H-quinone oxidoreductase subunit 1.